Consider the following 81-residue polypeptide: Photosystem I iron-sulfur center (81 aa).

2 4Fe-4S ferredoxin-type domains span residues 2–31 (SHSV…MVPW) and 37–68 (GQIA…VRVY). Residues C11, C14, C17, C21, C48, C51, C54, and C58 each coordinate [4Fe-4S] cluster.

As to quaternary structure, the cyanobacterial PSI reaction center is composed of one copy each of PsaA,B,C,D,E,F,I,J,K,L,M and X, and forms trimeric complexes. [4Fe-4S] cluster serves as cofactor.

Its subcellular location is the cellular thylakoid membrane. It carries out the reaction reduced [plastocyanin] + hnu + oxidized [2Fe-2S]-[ferredoxin] = oxidized [plastocyanin] + reduced [2Fe-2S]-[ferredoxin]. Apoprotein for the two 4Fe-4S centers FA and FB of photosystem I (PSI); essential for photochemical activity. FB is the terminal electron acceptor of PSI, donating electrons to ferredoxin. The C-terminus interacts with PsaA/B/D and helps assemble the protein into the PSI complex. Required for binding of PsaD and PsaE to PSI. PSI is a plastocyanin/cytochrome c6-ferredoxin oxidoreductase, converting photonic excitation into a charge separation, which transfers an electron from the donor P700 chlorophyll pair to the spectroscopically characterized acceptors A0, A1, FX, FA and FB in turn. This is Photosystem I iron-sulfur center from Prochlorococcus marinus (strain SARG / CCMP1375 / SS120).